We begin with the raw amino-acid sequence, 192 residues long: Immunity protein YqcF (192 aa).

As to quaternary structure, probably interacts with cognate toxin YqcG but not with other non-cognate toxins. The interaction inhibits the toxic activity of YqcG.

Its subcellular location is the cytoplasm. Immunity component of one of 6 LXG toxin-immunity modules in this strain. They promote kin selection, mediate competition in biofilms, and drive spatial segregation of different strains, indicating that LXG toxins may help avoid warfare between strains in biofilms. Mediates intercellular competition during biofilm formation; disruption of the operon disadvantages the bacteria, but overexpression of the cognate immunity protein restores growth in competition with wild-type. In situ neutralizes the toxic effect of cognate toxin YqcG. Neutralizes the toxic activity of cognate toxin YqcG upon expression in E.coli. Does not have immunity protein activity on other LXG toxins. This Bacillus subtilis (strain 168) protein is Immunity protein YqcF (yqcF).